The sequence spans 131 residues: UPF0102 protein YraN (131 aa).

Polar residues predominate over residues 1 to 19 (MATVPTRSGSPRQLTTKQT). A disordered region spans residues 1–21 (MATVPTRSGSPRQLTTKQTGD).

Belongs to the UPF0102 family.

This chain is UPF0102 protein YraN, found in Escherichia coli O127:H6 (strain E2348/69 / EPEC).